We begin with the raw amino-acid sequence, 693 residues long: Translation factor GUF1 homolog, chloroplastic (693 aa).

The N-terminal 51 residues, Met1–Leu51, are a transit peptide targeting the chloroplast. A tr-type G domain is found at Ser86–Arg267. GTP contacts are provided by residues Ala95–Ser102, Asp160–His164, and Asn214–Asp217.

This sequence belongs to the TRAFAC class translation factor GTPase superfamily. Classic translation factor GTPase family. LepA subfamily.

It is found in the plastid. The protein localises to the chloroplast. It carries out the reaction GTP + H2O = GDP + phosphate + H(+). Its function is as follows. Promotes chloroplast protein synthesis. May act as a fidelity factor of the translation reaction, by catalyzing a one-codon backward translocation of tRNAs on improperly translocated ribosomes. This Ricinus communis (Castor bean) protein is Translation factor GUF1 homolog, chloroplastic.